Here is a 536-residue protein sequence, read N- to C-terminus: Ribulokinase (536 aa).

Belongs to the ribulokinase family.

The enzyme catalyses D-ribulose + ATP = D-ribulose 5-phosphate + ADP + H(+). The catalysed reaction is L-ribulose + ATP = L-ribulose 5-phosphate + ADP + H(+). Its pathway is carbohydrate degradation; L-arabinose degradation via L-ribulose; D-xylulose 5-phosphate from L-arabinose (bacterial route): step 2/3. In Staphylococcus epidermidis (strain ATCC 12228 / FDA PCI 1200), this protein is Ribulokinase.